The primary structure comprises 382 residues: Mannosyl phosphorylinositol ceramide synthase SUR1 (382 aa).

Over 1 to 6 (MRKELK) the chain is Cytoplasmic. The helical transmembrane segment at 7–27 (YLICFNILLLLSIIYYTFDLL) threads the bilayer. Topologically, residues 28–269 (TLCIDDTVKD…KALENHILSC (242 aa)) are extracellular. Residues 270–290 (VVTGFIFGFFILYGEFTFYCW) form a helical membrane-spanning segment. Residues 291 to 382 (LCSKNFSNLT…SKYSLGNNSS (92 aa)) lie on the Cytoplasmic side of the membrane. Position 349 is a phosphoserine (Ser349).

It belongs to the glycosyltransferase 32 family. Heterodimer of SUR1 and CSG2.

The protein localises to the membrane. The enzyme catalyses a 1D-myo-inositol-1-phospho-N-[(R)-2-hydroxy-very-long-chain fatty acyl]-(R)-4-hydroxysphingoid base + GDP-alpha-D-mannose = an alpha-D-mannosyl-(1&lt;-&gt;6)-1D-myo-inositol-1-phospho-N-[(R)-2-hydroxy-very-long-chain fatty acyl]-(R)-4-hydroxysphingoid base + GDP + H(+). Its function is as follows. Involved in the synthesis of mannosyl phosphorylinositol ceramide. Catalyzes the addition of mannosyl to phosphorylinositol ceramide. Suppressor of RVS161 mutation. In Saccharomyces cerevisiae (strain ATCC 204508 / S288c) (Baker's yeast), this protein is Mannosyl phosphorylinositol ceramide synthase SUR1.